A 1574-amino-acid polypeptide reads, in one-letter code: Disco-interacting protein 2 homolog B (1574 aa).

Residues S9, S50, and S53 each carry the phosphoserine modification. The DMAP1-binding domain maps to A12–F130. The disordered stretch occupies residues L31 to S166. Residues Y52–I62 show a composition bias toward polar residues. Residues Q69–S82 are compositionally biased toward low complexity. Position 70 is a phosphothreonine (T70). The segment covering G91–T103 has biased composition (basic and acidic residues). Phosphoserine is present on S99. Position 139 is a phosphothreonine (T139). S145, S147, and S152 each carry phosphoserine. Low complexity predominate over residues R154 to S166. 3 positions are modified to phosphoserine: S177, S192, and S202. The interval I178–S200 is disordered. The span at S181–S192 shows a compositional bias: low complexity. The disordered stretch occupies residues A217–I244. Residue S256 is modified to Phosphoserine.

It belongs to the DIP2 family. As to quaternary structure, interacts with alpha-tubulin. Highly expressed in brain and spinal cord (at protein level). In brain, expression is detected in the main olfactory bulb, cortex, lateral ventricle, cornu ammonis 1, cornu ammonis 3, dentate gyrus, striatum, cerebellar cortex and medial habenula. Expressed primarily in neurons including excitatory pyramidal neurons and inhibitory interneurons.

It is found in the cell projection. The protein resides in the dendrite. It localises to the axon. The protein localises to the perikaryon. In terms of biological role, negatively regulates axonal outgrowth and is essential for normal synaptic transmission. Not required for regulation of axon polarity. Promotes acetylation of alpha-tubulin. The chain is Disco-interacting protein 2 homolog B (Dip2b) from Mus musculus (Mouse).